A 257-amino-acid chain; its full sequence is Imidazole glycerol phosphate synthase subunit HisF (257 aa).

Active-site residues include Asp12 and Asp131.

Belongs to the HisA/HisF family. As to quaternary structure, heterodimer of HisH and HisF.

It localises to the cytoplasm. It catalyses the reaction 5-[(5-phospho-1-deoxy-D-ribulos-1-ylimino)methylamino]-1-(5-phospho-beta-D-ribosyl)imidazole-4-carboxamide + L-glutamine = D-erythro-1-(imidazol-4-yl)glycerol 3-phosphate + 5-amino-1-(5-phospho-beta-D-ribosyl)imidazole-4-carboxamide + L-glutamate + H(+). Its pathway is amino-acid biosynthesis; L-histidine biosynthesis; L-histidine from 5-phospho-alpha-D-ribose 1-diphosphate: step 5/9. Its function is as follows. IGPS catalyzes the conversion of PRFAR and glutamine to IGP, AICAR and glutamate. The HisF subunit catalyzes the cyclization activity that produces IGP and AICAR from PRFAR using the ammonia provided by the HisH subunit. The protein is Imidazole glycerol phosphate synthase subunit HisF of Kineococcus radiotolerans (strain ATCC BAA-149 / DSM 14245 / SRS30216).